The primary structure comprises 492 residues: Adenosylhomocysteinase (492 aa).

The substrate site is built by Thr-68, Asp-153, and Glu-215. Thr-216 to Thr-218 is an NAD(+) binding site. Substrate is bound by residues Lys-245 and Asp-249. Residues Asn-250, Gly-279 to Gly-284, Glu-302, Asn-337, Ile-358 to His-360, and Asn-406 contribute to the NAD(+) site.

The protein belongs to the adenosylhomocysteinase family. It depends on NAD(+) as a cofactor.

It localises to the cytoplasm. It catalyses the reaction S-adenosyl-L-homocysteine + H2O = L-homocysteine + adenosine. It functions in the pathway amino-acid biosynthesis; L-homocysteine biosynthesis; L-homocysteine from S-adenosyl-L-homocysteine: step 1/1. Functionally, may play a key role in the regulation of the intracellular concentration of adenosylhomocysteine. The chain is Adenosylhomocysteinase from Mycobacterium ulcerans (strain Agy99).